A 210-amino-acid polypeptide reads, in one-letter code: Superoxide dismutase [Mn], mitochondrial (210 aa).

The Mn(2+) site is built by histidine 29, histidine 77, aspartate 163, and histidine 167.

This sequence belongs to the iron/manganese superoxide dismutase family. As to quaternary structure, homotetramer. The cofactor is Mn(2+).

The protein resides in the mitochondrion matrix. It catalyses the reaction 2 superoxide + 2 H(+) = H2O2 + O2. Destroys superoxide anion radicals which are normally produced within the cells and which are toxic to biological systems. This Aspergillus fumigatus (strain ATCC MYA-4609 / CBS 101355 / FGSC A1100 / Af293) (Neosartorya fumigata) protein is Superoxide dismutase [Mn], mitochondrial (sodB).